A 158-amino-acid chain; its full sequence is Transcription elongation factor GreA (158 aa).

Positions 14–76 (VKKLEEELEY…QIENMLKNAN (63 aa)) form a coiled coil.

It belongs to the GreA/GreB family.

Its function is as follows. Necessary for efficient RNA polymerase transcription elongation past template-encoded arresting sites. The arresting sites in DNA have the property of trapping a certain fraction of elongating RNA polymerases that pass through, resulting in locked ternary complexes. Cleavage of the nascent transcript by cleavage factors such as GreA or GreB allows the resumption of elongation from the new 3'terminus. GreA releases sequences of 2 to 3 nucleotides. The chain is Transcription elongation factor GreA from Clostridium acetobutylicum (strain ATCC 824 / DSM 792 / JCM 1419 / IAM 19013 / LMG 5710 / NBRC 13948 / NRRL B-527 / VKM B-1787 / 2291 / W).